The sequence spans 512 residues: Spastin homolog (512 aa).

Residues 1–274 (MFAFSKGPAG…FKGLRQPVKG (274 aa)) lie on the Cytoplasmic side of the membrane. Residues 32–97 (IEMDELTKHA…MKLEKSAQDR (66 aa)) adopt a coiled-coil conformation. The tract at residues 110 to 182 (KQSRSATVGP…SDTVHPEPPV (73 aa)) is disordered. The interval 115–233 (ATVGPSRPAS…ERLLDEVLDN (119 aa)) is MTBD. The segment covering 137-163 (APEKKNAAKAKENDENRHVCSRGDRCG) has biased composition (basic and acidic residues). Positions 275–294 (ILLFGPPGNGKTLLAKAVAG) form an intramembrane region, helical. 279-286 (GPPGNGKT) is an ATP binding site. The Cytoplasmic segment spans residues 295–512 (ESKQMFFNIS…LSDFSRSFGC (218 aa)).

The protein belongs to the AAA ATPase family. Spastin subfamily. Homohexamer. The homohexamer is stabilized by ATP-binding. The homohexamer may adopt a ring conformation through which microtubules pass prior to being severed. Interacts with microtubules. Interacts (via N-terminus) with tubulin; the interaction is direct.

Its subcellular location is the membrane. The protein localises to the cytoplasm. It is found in the cytoskeleton. It localises to the perinuclear region. It catalyses the reaction n ATP + n H2O + a microtubule = n ADP + n phosphate + (n+1) alpha/beta tubulin heterodimers.. Its function is as follows. ATP-dependent microtubule severing protein that specifically recognizes and cuts microtubules. Probably by regulating microtubule remodeling, plays a role in new synapse formation in GABAergic DD (Dorsal D type) neurons. The polypeptide is Spastin homolog (Caenorhabditis elegans).